Consider the following 170-residue polypeptide: Thialysine N-epsilon-acetyltransferase (170 aa).

In terms of domain architecture, N-acetyltransferase spans 4-166 (VMIREAKEGD…FRFEGEAMRE (163 aa)). Position 27–28 (27–28 (YE)) interacts with substrate. An N6-acetyllysine modification is found at Lys-29. A substrate-binding site is contributed by Glu-92. Acetyl-CoA is bound by residues 94–96 (IYV), 102–107 (GQGIGS), 133–135 (NKR), and Tyr-140. Residue Tyr-140 is the Proton donor of the active site. Glu-152 lines the substrate pocket.

It belongs to the acetyltransferase family. As to quaternary structure, homodimer.

Its subcellular location is the cytoplasm. It carries out the reaction S-(2-aminoethyl)-L-cysteine + acetyl-CoA = S-(2-acetamidoethyl)-L-cysteine + CoA + H(+). The enzyme catalyses an alkane-alpha,omega-diamine + acetyl-CoA = an N-acetylalkane-alpha,omega-diamine + CoA + H(+). Functionally, catalyzes the N-acetylation of the amino acid thialysine (S-(2-aminoethyl)-L-cysteine), a L-lysine analog with the 4-methylene group substituted with a sulfur. May also catalyze acetylation of polyamines, such as norspermidine, spermidine or spermine. However, ability to acetylate polyamines is weak, suggesting that it does not act as a diamine acetyltransferase in vivo. This is Thialysine N-epsilon-acetyltransferase from Bos taurus (Bovine).